A 292-amino-acid chain; its full sequence is Selenate reductase subunit B (292 aa).

A signal peptide (tat-type signal) is located at residues 1-43 (MGSKETKNTSRRDFLIKGAGAAALGAGAFAISQVPLLEKLASA). 4Fe-4S ferredoxin-type domains are found at residues 84 to 113 (WIMV…PPGV), 129 to 160 (VTKK…KSED), and 161 to 190 (GIVA…FDWG). Cys-93, Cys-96, Cys-99, Cys-103, Cys-138, Cys-141, Cys-146, Cys-150, Cys-170, Cys-173, Cys-176, Cys-180, Cys-230, Cys-233, Cys-245, and Cys-249 together coordinate [4Fe-4S] cluster.

In terms of assembly, the complex is composed of three subunits: SrdA, SrdB and SrdC. [4Fe-4S] cluster is required as a cofactor. In terms of processing, predicted to be exported by the Tat system. The position of the signal peptide cleavage has not been experimentally proven.

The protein resides in the secreted. The catalysed reaction is selenite + a quinone + H2O = selenate + a quinol. Its function is as follows. Component of the respiratory selenate reductase complex, which catalyzes the reduction of selenate to selenite. This subunit probably transfers electrons from SrdC to SrdA. The polypeptide is Selenate reductase subunit B (Mesobacillus selenatarsenatis (strain DSM 18680 / JCM 14380 / FERM P-15431 / SF-1)).